We begin with the raw amino-acid sequence, 78 residues long: Acyl carrier protein (78 aa).

In terms of domain architecture, Carrier spans 2–77 (SDTVERVKKI…DAVKFIDKAS (76 aa)). The residue at position 37 (S37) is an O-(pantetheine 4'-phosphoryl)serine.

It belongs to the acyl carrier protein (ACP) family. Post-translationally, 4'-phosphopantetheine is transferred from CoA to a specific serine of apo-ACP by AcpS. This modification is essential for activity because fatty acids are bound in thioester linkage to the sulfhydryl of the prosthetic group.

The protein resides in the cytoplasm. Its pathway is lipid metabolism; fatty acid biosynthesis. In terms of biological role, carrier of the growing fatty acid chain in fatty acid biosynthesis. The protein is Acyl carrier protein of Bartonella henselae (strain ATCC 49882 / DSM 28221 / CCUG 30454 / Houston 1) (Rochalimaea henselae).